The primary structure comprises 1093 residues: MADSSSSSFFPDFGLLLYLEELNKEELNTFKLFLKETMEPEHGLTPWNEVKKARREDLANLMKKYYPGEKAWSVSLKIFGKMNLKDLCERAKEEINWSAQTIGPDDAKAGETQEDQEAVLGDGTEYRNRIKEKFCITWDKKSLAGKPEDFHHGIAEKDRKLLEHLFDVDVKTGAQPQIVVLQGAAGVGKTTLVRKAMLDWAEGSLYQQRFKYVFYLNGREINQLKERSFAQLISKDWPSTEGPIEEIMYQPSSLLFIIDSFDELNFAFEEPEFALCEDWTQEHPVSFLMSSLLRKVMLPEASLLVTTRLTTSKRLKQLLKNHHYVELLGMSEDAREEYIYQFFEDKRWAMKVFSSLKSNEMLFSMCQVPLVCWAACTCLKQQMEKGGDVTLTCQTTTALFTCYISSLFTPVDGGSPSLPNQAQLRRLCQVAAKGIWTMTYVFYRENLRRLGLTQSDVSSFMDSNIIQKDAEYENCYVFTHLHVQEFFAAMFYMLKGSWEAGNPSCQPFEDLKSLLQSTSYKDPHLTQMKCFLFGLLNEDRVKQLERTFNCKMSLKIKSKLLQCMEVLGNSDYSPSQLGFLELFHCLYETQDKAFISQAMRCFPKVAINICEKIHLLVSSFCLKHCRCLRTIRLSVTVVFEKKILKTSLPTNTWDGDRITHCWQDLCSVLHTNEHLRELDLYHSNLDKSAMNILHHELRHPNCKLQKLLLKFITFPDGCQDISTSLIHNKNLMHLDLKGSDIGDNGVKSLCEALKHPECKLQTLRLESCNLTVFCCLNISNALIRSQSLIFLNLSTNNLLDDGVQLLCEALRHPKCYLERLSLESCGLTEAGCEYLSLALISNKRLTHLCLADNVLGDGGVKLMSDALQHAQCTLKSLVLRRCHFTSLSSEYLSTSLLHNKSLTHLDLGSNWLQDNGVKLLCDVFRHPSCNLQDLELMGCVLTNACCLDLASVILNNPNLRSLDLGNNDLQDDGVKILCDALRYPNCNIQRLGLEYCGLTSLCCQDLSSALICNKRLIKMNLTQNTLGYEGIVKLYKVLKSPKCKLQVLGLCKEAFDEEAQKLLEAVGVSNPHLIIKPDCNYHNEEDVSWWWCF.

A Pyrin domain is found at 1-97; sequence MADSSSSSFF…CERAKEEINW (97 aa). The interval 102-121 is disordered; sequence IGPDDAKAGETQEDQEAVLG. One can recognise an NACHT domain in the interval 177–499; the sequence is QIVVLQGAAG…MFYMLKGSWE (323 aa). 183-190 provides a ligand contact to ATP; the sequence is GAAGVGKT. LRR repeat units follow at residues 730 to 750, 759 to 780, 787 to 807, 816 to 836, 844 to 864, 873 to 894, 901 to 921, 930 to 951, 958 to 978, 987 to 1008, and 1015 to 1035; these read NLMH…KSLC, KLQT…NISN, SLIF…QLLC, YLER…EYLS, RLTH…KLMS, TLKS…YLST, SLTH…KLLC, NLQD…DLAS, NLRS…KILC, NIQR…DLSS, and RLIK…VKLY.

Belongs to the NLRP family. In terms of tissue distribution, testis-specific.

The protein resides in the cytoplasm. May be involved in inflammation and spermatogenesis. The polypeptide is NACHT, LRR and PYD domains-containing protein 14 (NLRP14) (Homo sapiens (Human)).